The chain runs to 445 residues: UPF0210 protein LACR_1020 (445 aa).

This sequence belongs to the UPF0210 family. As to quaternary structure, homodimer.

This chain is UPF0210 protein LACR_1020, found in Lactococcus lactis subsp. cremoris (strain SK11).